Reading from the N-terminus, the 281-residue chain is Elongation factor Ts (281 aa).

The involved in Mg(2+) ion dislocation from EF-Tu stretch occupies residues 80 to 83 (TDFV).

It belongs to the EF-Ts family.

The protein localises to the cytoplasm. Associates with the EF-Tu.GDP complex and induces the exchange of GDP to GTP. It remains bound to the aminoacyl-tRNA.EF-Tu.GTP complex up to the GTP hydrolysis stage on the ribosome. The sequence is that of Elongation factor Ts from Vibrio parahaemolyticus serotype O3:K6 (strain RIMD 2210633).